The sequence spans 743 residues: Serine-rich coiled-coil domain-containing protein 1 (743 aa).

Disordered regions lie at residues 1–125 (MGDS…SRNK) and 156–175 (KSEG…SVKQ). Over residues 29 to 56 (LPSSPSSSNTVGVHSSSPSSTNSSSGST) the composition is skewed to low complexity. The span at 81 to 102 (EPTNQNLSISNGAQPGQSSMQK) shows a compositional bias: polar residues. Residues 672 to 713 (MKDECSMLKLQLKEKDELISQLQEELEKVQHLQKAFASRVDK) adopt a coiled-coil conformation.

It belongs to the CCSER family.

This chain is Serine-rich coiled-coil domain-containing protein 1 (CCSER1), found in Bos taurus (Bovine).